Reading from the N-terminus, the 255-residue chain is tRNA (guanine-N(1)-)-methyltransferase (255 aa).

Residues glycine 117 and 137–142 (IGDYVL) contribute to the S-adenosyl-L-methionine site.

This sequence belongs to the RNA methyltransferase TrmD family. In terms of assembly, homodimer.

It is found in the cytoplasm. It carries out the reaction guanosine(37) in tRNA + S-adenosyl-L-methionine = N(1)-methylguanosine(37) in tRNA + S-adenosyl-L-homocysteine + H(+). Its function is as follows. Specifically methylates guanosine-37 in various tRNAs. The polypeptide is tRNA (guanine-N(1)-)-methyltransferase (Chromobacterium violaceum (strain ATCC 12472 / DSM 30191 / JCM 1249 / CCUG 213 / NBRC 12614 / NCIMB 9131 / NCTC 9757 / MK)).